Consider the following 352-residue polypeptide: GTPase Obg (352 aa).

An Obg domain is found at 1-159 (MSFIDEAKVF…FPIFMQLKVL (159 aa)). In terms of domain architecture, OBG-type G spans 160-327 (SDIGIIGMPN…VMLYEMLQKD (168 aa)). Residues 166–173 (GMPNAGKS), 191–195 (FTTLE), 212–215 (DIPG), 279–282 (NKCD), and 308–310 (SLD) contribute to the GTP site. Mg(2+) contacts are provided by S173 and T193.

Belongs to the TRAFAC class OBG-HflX-like GTPase superfamily. OBG GTPase family. In terms of assembly, monomer. Mg(2+) is required as a cofactor.

Its subcellular location is the cytoplasm. An essential GTPase which binds GTP, GDP and possibly (p)ppGpp with moderate affinity, with high nucleotide exchange rates and a fairly low GTP hydrolysis rate. Plays a role in control of the cell cycle, stress response, ribosome biogenesis and in those bacteria that undergo differentiation, in morphogenesis control. The protein is GTPase Obg of Anaplasma phagocytophilum (strain HZ).